Here is a 587-residue protein sequence, read N- to C-terminus: Nucleoporin ndc-1 (587 aa).

Topologically, residues 1-79 (MMGENSSAYT…FHSEIDVRKK (79 aa)) are cytoplasmic. A disordered region spans residues 32–55 (ASTSATSSPNLRKSPNRGFSSPRA). The chain crosses the membrane as a helical span at residues 80–100 (LASFVCGAAVALSFIVTVSIL). Residues 101-121 (KLSIWAPFSSVQDSLTWWLYP) are Perinuclear space-facing. Residues 122-142 (TSWPVTLFIWLSSVAWTFLII) form a helical membrane-spanning segment. Over 143-161 (HQFCTVTQVPRIPITDTYA) the chain is Cytoplasmic. A helical membrane pass occupies residues 162–182 (WAGAALEFVHRLIFVYTAFTV). Residues 183 to 187 (SESSF) are Perinuclear space-facing. A helical membrane pass occupies residues 188–208 (FEDFAWIAIAFSVAISSALVI). Residues 209 to 255 (FRSDFHLNFSNVQVNSFKTLIDFAKSLPYGSLAETSGVDAAIAYTAA) lie on the Cytoplasmic side of the membrane. The chain crosses the membrane as a helical span at residues 256–276 (MALTVFGSPLLWGFSAWWLLI). The Perinuclear space segment spans residues 277-281 (NIQFH). The helical transmembrane segment at 282-302 (LVLFGVCFAQQFFAKIFMKIV) threads the bilayer. Residues 303 to 587 (NQIVMKPMKF…TIKLVCAEEI (285 aa)) are Cytoplasmic-facing.

The protein belongs to the NDC1 family.

It is found in the nucleus. It localises to the nuclear pore complex. Its subcellular location is the nucleus membrane. Component of the nuclear pore complex (NPC), which plays a key role in de novo assembly and insertion of NPC in the nuclear envelope. In Caenorhabditis briggsae, this protein is Nucleoporin ndc-1 (npp-22).